The primary structure comprises 515 residues: Glucose-6-phosphate 1-dehydrogenase (515 aa).

N-acetylalanine is present on alanine 2. The residue at position 8 (serine 8) is a Phosphoserine. Threonine 10 bears the Phosphothreonine mark. Residue phenylalanine 26 is modified to Phosphoserine. Residues 38 to 45 and arginine 72 each bind NADP(+); that span reads GASGDLAK. Lysine 89 carries the post-translational modification N6-acetyllysine. The NADP(+) site is built by tyrosine 147 and lysine 171. D-glucose 6-phosphate-binding positions include lysine 171, 201-205, glutamate 239, and aspartate 258; that span reads HYLGK. Residue lysine 171 is modified to N6-(2-hydroxyisobutyryl)lysine; alternate. Lysine 171 bears the N6-acetyllysine; alternate mark. The active-site Proton acceptor is the histidine 263. Arginine 357 is an NADP(+) binding site. Residues lysine 360 and arginine 365 each contribute to the D-glucose 6-phosphate site. NADP(+) contacts are provided by lysine 366, arginine 370, and arginine 393. Residue glutamine 395 participates in D-glucose 6-phosphate binding. Residues 401–403 and 421–423 each bind NADP(+); these read YTK and DLT. An N6-acetyllysine modification is found at lysine 403. Lysine 432 carries the N6-acetyllysine modification. Arginine 487 serves as a coordination point for NADP(+). Position 497 is an N6-acetyllysine (lysine 497). Positions 503 and 509 each coordinate NADP(+). At tyrosine 503 the chain carries Phosphotyrosine.

It belongs to the glucose-6-phosphate dehydrogenase family. Homotetramer; dimer of dimers. Interacts with SIRT2; the interaction is enhanced by H(2)O(2) treatment. Forms a ternary complex with ALDOB and TP53; this interaction is direct. ALDOB stabilizes the complex inhibiting G6PD activity and keeping oxidative pentose phosphate metabolism in check. Acetylated by ELP3 at Lys-403; acetylation inhibits its homodimerization and enzyme activity. Deacetylated by SIRT2 at Lys-403; deacetylation stimulates its enzyme activity. As to expression, isoform Long is found in lymphoblasts, granulocytes and sperm.

It is found in the cytoplasm. The protein localises to the cytosol. The protein resides in the membrane. It catalyses the reaction D-glucose 6-phosphate + NADP(+) = 6-phospho-D-glucono-1,5-lactone + NADPH + H(+). Its pathway is carbohydrate degradation; pentose phosphate pathway; D-ribulose 5-phosphate from D-glucose 6-phosphate (oxidative stage): step 1/3. Catalyzes the rate-limiting step of the oxidative pentose-phosphate pathway, which represents a route for the dissimilation of carbohydrates besides glycolysis. The main function of this enzyme is to provide reducing power (NADPH) and pentose phosphates for fatty acid and nucleic acid synthesis. The chain is Glucose-6-phosphate 1-dehydrogenase (G6PD) from Homo sapiens (Human).